The primary structure comprises 266 residues: 4-hydroxy-tetrahydrodipicolinate reductase (266 aa).

10 to 15 (GPRGRM) lines the NAD(+) pocket. Lys38 serves as a coordination point for NADP(+). NAD(+) is bound by residues 99–101 (GTT) and 125–128 (APNF). His155 acts as the Proton donor/acceptor in catalysis. His156 is a binding site for (S)-2,3,4,5-tetrahydrodipicolinate. The active-site Proton donor is Lys159. (S)-2,3,4,5-tetrahydrodipicolinate is bound at residue 165 to 166 (GT).

It belongs to the DapB family.

Its subcellular location is the cytoplasm. It catalyses the reaction (S)-2,3,4,5-tetrahydrodipicolinate + NAD(+) + H2O = (2S,4S)-4-hydroxy-2,3,4,5-tetrahydrodipicolinate + NADH + H(+). The enzyme catalyses (S)-2,3,4,5-tetrahydrodipicolinate + NADP(+) + H2O = (2S,4S)-4-hydroxy-2,3,4,5-tetrahydrodipicolinate + NADPH + H(+). The protein operates within amino-acid biosynthesis; L-lysine biosynthesis via DAP pathway; (S)-tetrahydrodipicolinate from L-aspartate: step 4/4. In terms of biological role, catalyzes the conversion of 4-hydroxy-tetrahydrodipicolinate (HTPA) to tetrahydrodipicolinate. The polypeptide is 4-hydroxy-tetrahydrodipicolinate reductase (Bacillus cereus (strain ATCC 10987 / NRS 248)).